The sequence spans 95 residues: Cell division topological specificity factor (95 aa).

The protein belongs to the MinE family.

Its function is as follows. Prevents the cell division inhibition by proteins MinC and MinD at internal division sites while permitting inhibition at polar sites. This ensures cell division at the proper site by restricting the formation of a division septum at the midpoint of the long axis of the cell. This chain is Cell division topological specificity factor, found in Psychrobacter cryohalolentis (strain ATCC BAA-1226 / DSM 17306 / VKM B-2378 / K5).